The chain runs to 570 residues: Protein misato homolog 1 (570 aa).

Phosphoserine is present on S495.

Belongs to the misato family. As to expression, present in all cell lines tested (at protein level). Widely expressed.

It localises to the mitochondrion outer membrane. The protein resides in the cytoplasm. Its function is as follows. Involved in the regulation of mitochondrial distribution and morphology. Required for mitochondrial fusion and mitochondrial network formation. This chain is Protein misato homolog 1 (MSTO1), found in Homo sapiens (Human).